The following is a 226-amino-acid chain: NADH-quinone oxidoreductase subunit C (226 aa).

A disordered region spans residues 1–21 (MTEPTGDQTPEIIGVRRGMFG).

It belongs to the complex I 30 kDa subunit family. NDH-1 is composed of 14 different subunits. Subunits NuoB, C, D, E, F, and G constitute the peripheral sector of the complex.

It is found in the cell membrane. The catalysed reaction is a quinone + NADH + 5 H(+)(in) = a quinol + NAD(+) + 4 H(+)(out). NDH-1 shuttles electrons from NADH, via FMN and iron-sulfur (Fe-S) centers, to quinones in the respiratory chain. The immediate electron acceptor for the enzyme in this species is believed to be a menaquinone. Couples the redox reaction to proton translocation (for every two electrons transferred, four hydrogen ions are translocated across the cytoplasmic membrane), and thus conserves the redox energy in a proton gradient. This chain is NADH-quinone oxidoreductase subunit C, found in Mycolicibacterium gilvum (strain PYR-GCK) (Mycobacterium gilvum (strain PYR-GCK)).